We begin with the raw amino-acid sequence, 554 residues long: Probable urocanate hydratase (554 aa).

NAD(+) is bound by residues 49-50 (GG), glutamine 127, glutamate 194, 240-241 (NA), 261-265 (QTAAH), 271-272 (YI), and tyrosine 320. Residue cysteine 408 is part of the active site. Glycine 490 is an NAD(+) binding site.

Belongs to the urocanase family. NAD(+) serves as cofactor.

The protein localises to the cytoplasm. It catalyses the reaction 4-imidazolone-5-propanoate = trans-urocanate + H2O. The protein operates within amino-acid degradation; L-histidine degradation into L-glutamate; N-formimidoyl-L-glutamate from L-histidine: step 2/3. In terms of biological role, catalyzes the conversion of urocanate to 4-imidazolone-5-propionate. The chain is Probable urocanate hydratase from Thermoplasma acidophilum (strain ATCC 25905 / DSM 1728 / JCM 9062 / NBRC 15155 / AMRC-C165).